We begin with the raw amino-acid sequence, 427 residues long: Trigger factor (427 aa).

One can recognise a PPIase FKBP-type domain in the interval glycine 163 to proline 248.

This sequence belongs to the FKBP-type PPIase family. Tig subfamily.

Its subcellular location is the cytoplasm. It carries out the reaction [protein]-peptidylproline (omega=180) = [protein]-peptidylproline (omega=0). Involved in protein export. Acts as a chaperone by maintaining the newly synthesized protein in an open conformation. Functions as a peptidyl-prolyl cis-trans isomerase. In Streptococcus suis (strain 05ZYH33), this protein is Trigger factor.